The chain runs to 425 residues: UPF0229 protein ETA_15540 (425 aa).

The segment at 60–111 (NEPSFHQGRGGERYRVHPGNDHFVQNDRVDRPQGGGAGGSGQGNAGKDGEGQ) is disordered. Over residues 68–90 (RGGERYRVHPGNDHFVQNDRVDR) the composition is skewed to basic and acidic residues. Gly residues predominate over residues 92-105 (QGGGAGGSGQGNAG).

The protein belongs to the UPF0229 family.

The protein is UPF0229 protein ETA_15540 of Erwinia tasmaniensis (strain DSM 17950 / CFBP 7177 / CIP 109463 / NCPPB 4357 / Et1/99).